A 271-amino-acid chain; its full sequence is 5'-nucleotidase SurE (271 aa).

A divalent metal cation is bound by residues Asp-14, Asp-15, Ser-46, and Asn-104.

It belongs to the SurE nucleotidase family. A divalent metal cation serves as cofactor.

Its subcellular location is the cytoplasm. It catalyses the reaction a ribonucleoside 5'-phosphate + H2O = a ribonucleoside + phosphate. Its function is as follows. Nucleotidase that shows phosphatase activity on nucleoside 5'-monophosphates. The chain is 5'-nucleotidase SurE from Gloeothece citriformis (strain PCC 7424) (Cyanothece sp. (strain PCC 7424)).